We begin with the raw amino-acid sequence, 990 residues long: Bifunctional glutamine synthetase adenylyltransferase/adenylyl-removing enzyme (990 aa).

Residues Met-1–Pro-474 form an adenylyl removase region. The segment at Ala-478 to Ala-990 is adenylyl transferase.

It belongs to the GlnE family. It depends on Mg(2+) as a cofactor.

The catalysed reaction is [glutamine synthetase]-O(4)-(5'-adenylyl)-L-tyrosine + phosphate = [glutamine synthetase]-L-tyrosine + ADP. It carries out the reaction [glutamine synthetase]-L-tyrosine + ATP = [glutamine synthetase]-O(4)-(5'-adenylyl)-L-tyrosine + diphosphate. Functionally, involved in the regulation of glutamine synthetase GlnA, a key enzyme in the process to assimilate ammonia. When cellular nitrogen levels are high, the C-terminal adenylyl transferase (AT) inactivates GlnA by covalent transfer of an adenylyl group from ATP to specific tyrosine residue of GlnA, thus reducing its activity. Conversely, when nitrogen levels are low, the N-terminal adenylyl removase (AR) activates GlnA by removing the adenylyl group by phosphorolysis, increasing its activity. The regulatory region of GlnE binds the signal transduction protein PII (GlnB) which indicates the nitrogen status of the cell. This is Bifunctional glutamine synthetase adenylyltransferase/adenylyl-removing enzyme from Rhodopseudomonas palustris (strain TIE-1).